The primary structure comprises 356 residues: sn-glycerol-3-phosphate import ATP-binding protein UgpC (356 aa).

Positions Leu4–Ile235 constitute an ABC transporter domain. Gly37–Ser44 provides a ligand contact to ATP.

Belongs to the ABC transporter superfamily. sn-glycerol-3-phosphate importer (TC 3.A.1.1.3) family. As to quaternary structure, the complex is composed of two ATP-binding proteins (UgpC), two transmembrane proteins (UgpA and UgpE) and a solute-binding protein (UgpB).

The protein localises to the cell inner membrane. It catalyses the reaction sn-glycerol 3-phosphate(out) + ATP + H2O = sn-glycerol 3-phosphate(in) + ADP + phosphate + H(+). Part of the ABC transporter complex UgpBAEC involved in sn-glycerol-3-phosphate (G3P) import. Responsible for energy coupling to the transport system. The chain is sn-glycerol-3-phosphate import ATP-binding protein UgpC from Salmonella choleraesuis (strain SC-B67).